Consider the following 37-residue polypeptide: Large ribosomal subunit protein bL36 (37 aa).

Belongs to the bacterial ribosomal protein bL36 family.

The chain is Large ribosomal subunit protein bL36 from Treponema denticola (strain ATCC 35405 / DSM 14222 / CIP 103919 / JCM 8153 / KCTC 15104).